A 59-amino-acid polypeptide reads, in one-letter code: Large ribosomal subunit protein uL30 (59 aa).

It belongs to the universal ribosomal protein uL30 family. Part of the 50S ribosomal subunit.

In Alkaliphilus metalliredigens (strain QYMF), this protein is Large ribosomal subunit protein uL30.